The primary structure comprises 913 residues: WD repeat-containing protein 44 (913 aa).

Positions 1-14 (MASESDTEEFYDAP) are enriched in acidic residues. The segment at 1 to 24 (MASESDTEEFYDAPEDVHLGGGYP) is disordered. N-acetylalanine is present on A2. Residues 2–170 (ASESDTEEFY…SSTEQLNVLE (169 aa)) are binding activity. The residue at position 3 (S3) is a Phosphoserine. An FFAT-like motif motif is present at residues 9–15 (EFYDAPE). A Phosphotyrosine modification is found at Y11. Phosphoserine occurs at positions 27, 50, 66, 71, 81, 96, and 126. Positions 119–184 (EESQKAESQN…VLNKEAVEVK (66 aa)) form a coiled coil. Phosphothreonine occurs at positions 158 and 219. Residues 205–348 (AVEEVAPAKP…RPRSNSGREL (144 aa)) form a disordered region. The tract at residues 211–257 (PAKPPRHLTPEPDIVASTKKPVPARPPPPTNFPPPRPPPPSRPAPPP) is important for interaction with ARHGAP26 AND ARHGAP10. A compositionally biased stretch (pro residues) spans 233-256 (PARPPPPTNFPPPRPPPPSRPAPP). S262 bears the Phosphoserine mark. Basic and acidic residues predominate over residues 262-278 (SELEFETLKTPDIDVPK). At T271 the chain carries Phosphothreonine. The span at 280-311 (NITSDSLLTASMASESTVKDSQPSLDLASATS) shows a compositional bias: polar residues. The tract at residues 334–347 (VMGPQRPRSNSGRE) is important for interaction with RAB11A. A phosphoserine; by PKB/AKT1 mark is found at S342 and S344. T349 is subject to Phosphothreonine. Disordered regions lie at residues 397-424 (SNDA…LKQK) and 459-480 (DEVF…MPYT). A phosphoserine mark is found at S403, S470, S471, and S472. A compositionally biased stretch (acidic residues) spans 467 to 476 (DDPSSSDDEG). Y479 is subject to Phosphotyrosine. The stretch at 509–548 (EHMGAVWTMKFSHCGRLLASAGQDNVVRIWALKNAFDYFN) is one WD 1 repeat. Residues 557-593 (EGRVSPSPSQESLSSSKSDTDTGVCSGTDEDPDDKNA) are disordered. Phosphoserine is present on residues S561 and S565. A compositionally biased stretch (low complexity) spans 561 to 573 (SPSPSQESLSSSK). WD repeat units lie at residues 605–643 (GHTA…CLCC), 645–685 (QHID…VALW), 690–729 (GQTK…YHTQ), 740–779 (KVGR…LSMK), 784–823 (VNSS…SKFT), and 876–913 (VLDA…KNVS).

Interacts with the GTP-bound form of RAB11A and RAB11B. Interacts with GRAF1/ARHGAP26 or GRAF2/ARHGAP10; the interaction connects the endoplasmic reticulum (ER) with the endosomal tubule. Interacts (via FFAT-like motif) with VAPA (via MSP domain) or VAPB (via MSP domain); the interaction connects the ER with the endosomal tubule. Does not bind to RAB7, RAB10, RAB14, RAB35 and RAB8A. Phosphorylated by ATK1; the phosphorylation stabilizes its interaction with RAB11A and RAB11B.

It is found in the cytoplasm. The protein localises to the cytosol. Its subcellular location is the perinuclear region. The protein resides in the endosome membrane. It localises to the golgi apparatus. It is found in the trans-Golgi network. Downstream effector for Rab11 which regulates Rab11 intracellular membrane trafficking functions such as endocytic recycling, intracellular ciliogenesis and protein export. ATK1-mediated phosphorylation of WDR44 induces binding to Rab11 which activates endocytic recycling of transferrin receptor back to the plasma membrane. When bound to Rab11, prevents the formation of the ciliogenic Rab11-Rabin8/RAB3IP-RAB11FIP3 complex, therefore inhibiting preciliary trafficking and ciliogenesis. Participates in neo-synthesized protein export by connecting the endoplasmic reticulum (ER) with the endosomal tubule via direct interactions with the integral ER proteins VAPA or VAPB and the endosomal protein GRAFs (GRAF1/ARHGAP26 or GRAF2/ARHGAP10), which facilitates the transfer of proteins such as E-cadherin, MPP14 and CFTR into a Rab8-Rab10-Rab11-dependent export route. This is WD repeat-containing protein 44 from Homo sapiens (Human).